The primary structure comprises 28 residues: Sarcolamban A (28 aa).

The helical transmembrane segment at 7 to 27 (LFTTFGILAILLFFLYLIYAV) threads the bilayer.

In terms of assembly, interacts with SERCA. Strongly expressed in embryonic and larval somatic muscles and postembryonic heart.

It is found in the sarcoplasmic reticulum membrane. Its subcellular location is the cell membrane. It localises to the sarcolemma. The protein resides in the T-tubule. In terms of biological role, plays an essential role in the regulation of calcium transport at the sarcoplasmic reticulum (SR), which is secondarily required for regular muscle contraction. In Drosophila melanogaster (Fruit fly), this protein is Sarcolamban A.